We begin with the raw amino-acid sequence, 348 residues long: uncharacterized protein (348 aa).

It belongs to the Mu gp47/PBSX XkdT family.

This is an uncharacterized protein from Bacillus subtilis (strain 168).